The sequence spans 158 residues: Succinate dehydrogenase [ubiquinone] cytochrome b small subunit B, mitochondrial (158 aa).

The N-terminal 29 residues, 1-29 (MAALVRISSLCHRGVSPLLFRPSSLIRPL), are a transit peptide targeting the mitochondrion. Topologically, residues 30–62 (AVQQKDHDCSYLISARIHATPSNYAGSGSKAAT) are mitochondrial matrix. Residues 63–84 (MHWTGERILSIALLSLAPVAYF) traverse the membrane as a helical segment. Topologically, residues 85–89 (CPSPA) are mitochondrial intermembrane. The helical transmembrane segment at 90–110 (VDYSLAAALTLHGHWGLGQVV) threads the bilayer. Heme b is bound at residue H101. The Mitochondrial matrix segment spans residues 111–119 (TDYVHGDAK). Y113 contributes to the a ubiquinone binding site. Residues 120–141 (IKMANAGLFVLSTVTFAGLCYF) form a helical membrane-spanning segment. Residues 142-158 (NYHDVGICKAVALLWSK) lie on the Mitochondrial intermembrane side of the membrane.

The protein belongs to the CybS family. Component of complex II composed of four subunits: the flavoprotein (FP) SDHA, iron-sulfur protein (IP) SDHB, and a cytochrome b560 composed of SDHC and SDHD.

It localises to the mitochondrion inner membrane. It participates in carbohydrate metabolism; tricarboxylic acid cycle. Its function is as follows. Membrane-anchoring subunit of succinate dehydrogenase (SDH) that is involved in complex II of the mitochondrial electron transport chain and is responsible for transferring electrons from succinate to ubiquinone (coenzyme Q). SDH also oxidizes malate to the non-canonical enol form of oxaloacetate, enol-oxaloacetate. Enol-oxaloacetate, which is a potent inhibitor of the succinate dehydrogenase activity, is further isomerized into keto-oxaloacetate. The chain is Succinate dehydrogenase [ubiquinone] cytochrome b small subunit B, mitochondrial (sdhdb) from Danio rerio (Zebrafish).